Consider the following 715-residue polypeptide: Patatin-like phospholipase domain-containing protein ATEG_02594 (715 aa).

Residues tryptophan 84–threonine 104 form a helical membrane-spanning segment. One can recognise a PNPLA domain in the interval leucine 274 to asparagine 465. The GXSXG signature appears at glycine 305–glycine 309. Serine 307 acts as the Nucleophile in catalysis. Aspartate 452 acts as the Proton acceptor in catalysis. Positions threonine 613–glutamine 715 are disordered. Positions arginine 652–aspartate 661 are enriched in basic and acidic residues. The segment covering alanine 665–alanine 678 has biased composition (polar residues).

Belongs to the PLPL family.

It localises to the membrane. In terms of biological role, probable lipid hydrolase. The chain is Patatin-like phospholipase domain-containing protein ATEG_02594 from Aspergillus terreus (strain NIH 2624 / FGSC A1156).